A 235-amino-acid chain; its full sequence is MAKHGKRYQESRKKVDREKLYSPADALELVKDIASANFDETVDLAVKLGVDPKHADQNVRGAVVLPKGTGKEVKVIVFAKGEKAKEAEEAGADVVGADDLAEKIKGGWLDFDVAIATPDMMSVVGKLGRILGPKGLMPNPKVGTVTFELEKAVKDAKAGKIEYRVDKNGNIHLPIGKVSFPVDDLMENFKTIIDVLLRERPASAKGRYMRSVTVSSTMGPGIKVDPNQAIDLIRK.

It belongs to the universal ribosomal protein uL1 family. Part of the 50S ribosomal subunit.

Binds directly to 23S rRNA. The L1 stalk is quite mobile in the ribosome, and is involved in E site tRNA release. Its function is as follows. Protein L1 is also a translational repressor protein, it controls the translation of the L11 operon by binding to its mRNA. The sequence is that of Large ribosomal subunit protein uL1 from Halothermothrix orenii (strain H 168 / OCM 544 / DSM 9562).